The chain runs to 344 residues: GTP 3',8-cyclase (344 aa).

In terms of domain architecture, Radical SAM core spans 19 to 245 (PFGRAVTYLR…DIPYRTGGPA (227 aa)). Position 28 (Arg-28) interacts with GTP. The [4Fe-4S] cluster site is built by Cys-35 and Cys-39. An S-adenosyl-L-methionine-binding site is contributed by Tyr-41. Cys-42 contributes to the [4Fe-4S] cluster binding site. Arg-77 contacts GTP. Gly-81 contacts S-adenosyl-L-methionine. Thr-111 provides a ligand contact to GTP. Ser-135 serves as a coordination point for S-adenosyl-L-methionine. Residue Lys-171 participates in GTP binding. Met-205 serves as a coordination point for S-adenosyl-L-methionine. 2 residues coordinate [4Fe-4S] cluster: Cys-268 and Cys-271. 273-275 (RVR) lines the GTP pocket. [4Fe-4S] cluster is bound at residue Cys-285.

This sequence belongs to the radical SAM superfamily. MoaA family. In terms of assembly, monomer and homodimer. [4Fe-4S] cluster is required as a cofactor.

The catalysed reaction is GTP + AH2 + S-adenosyl-L-methionine = (8S)-3',8-cyclo-7,8-dihydroguanosine 5'-triphosphate + 5'-deoxyadenosine + L-methionine + A + H(+). The protein operates within cofactor biosynthesis; molybdopterin biosynthesis. Catalyzes the cyclization of GTP to (8S)-3',8-cyclo-7,8-dihydroguanosine 5'-triphosphate. In Brucella abortus (strain S19), this protein is GTP 3',8-cyclase.